A 93-amino-acid polypeptide reads, in one-letter code: Small ribosomal subunit protein uS15 (93 aa).

It belongs to the universal ribosomal protein uS15 family. Part of the 30S ribosomal subunit. Forms a bridge to the 50S subunit in the 70S ribosome, contacting the 23S rRNA.

One of the primary rRNA binding proteins, it binds directly to 16S rRNA where it helps nucleate assembly of the platform of the 30S subunit by binding and bridging several RNA helices of the 16S rRNA. Functionally, forms an intersubunit bridge (bridge B4) with the 23S rRNA of the 50S subunit in the ribosome. The sequence is that of Small ribosomal subunit protein uS15 from Anaplasma marginale (strain St. Maries).